A 180-amino-acid polypeptide reads, in one-letter code: Cytochrome b6-f complex subunit 4 (180 aa).

3 consecutive transmembrane segments (helical) span residues 36-56 (LSYI…GLAV), 95-115 (LLGV…PFLE), and 131-151 (TVSL…ALPI).

The protein belongs to the cytochrome b family. PetD subfamily. As to quaternary structure, the 4 large subunits of the cytochrome b6-f complex are cytochrome b6, subunit IV (17 kDa polypeptide, petD), cytochrome f and the Rieske protein, while the 4 small subunits are petG, petL, petM and petN. The complex functions as a dimer.

It localises to the plastid. The protein localises to the chloroplast thylakoid membrane. Its function is as follows. Component of the cytochrome b6-f complex, which mediates electron transfer between photosystem II (PSII) and photosystem I (PSI), cyclic electron flow around PSI, and state transitions. In Pinus thunbergii (Japanese black pine), this protein is Cytochrome b6-f complex subunit 4.